The primary structure comprises 237 residues: UPF0758 protein Aave_3773 (237 aa).

In terms of domain architecture, MPN spans 115-237 (LFHSPRAVRD…SLSMAEEGLI (123 aa)). The Zn(2+) site is built by histidine 186, histidine 188, and aspartate 199. The JAMM motif signature appears at 186-199 (HNHPSGQVQPSRAD).

It belongs to the UPF0758 family.

This chain is UPF0758 protein Aave_3773, found in Paracidovorax citrulli (strain AAC00-1) (Acidovorax citrulli).